A 225-amino-acid chain; its full sequence is NAD(P)H-quinone oxidoreductase subunit K, chloroplastic (225 aa).

Residues Cys-43, Cys-44, Cys-108, and Cys-139 each coordinate [4Fe-4S] cluster.

This sequence belongs to the complex I 20 kDa subunit family. NDH is composed of at least 16 different subunits, 5 of which are encoded in the nucleus. It depends on [4Fe-4S] cluster as a cofactor.

The protein resides in the plastid. It is found in the chloroplast thylakoid membrane. It catalyses the reaction a plastoquinone + NADH + (n+1) H(+)(in) = a plastoquinol + NAD(+) + n H(+)(out). The catalysed reaction is a plastoquinone + NADPH + (n+1) H(+)(in) = a plastoquinol + NADP(+) + n H(+)(out). In terms of biological role, NDH shuttles electrons from NAD(P)H:plastoquinone, via FMN and iron-sulfur (Fe-S) centers, to quinones in the photosynthetic chain and possibly in a chloroplast respiratory chain. The immediate electron acceptor for the enzyme in this species is believed to be plastoquinone. Couples the redox reaction to proton translocation, and thus conserves the redox energy in a proton gradient. In Liriodendron tulipifera (Tuliptree), this protein is NAD(P)H-quinone oxidoreductase subunit K, chloroplastic.